The chain runs to 389 residues: Galactose-1-phosphate uridylyltransferase (389 aa).

Belongs to the galactose-1-phosphate uridylyltransferase type 2 family.

Its subcellular location is the cytoplasm. The enzyme catalyses alpha-D-galactose 1-phosphate + UDP-alpha-D-glucose = alpha-D-glucose 1-phosphate + UDP-alpha-D-galactose. The protein operates within carbohydrate metabolism; galactose metabolism. This is Galactose-1-phosphate uridylyltransferase (galT) from Butyrivibrio fibrisolvens.